We begin with the raw amino-acid sequence, 89 residues long: Small ribosomal subunit protein uS15 (89 aa).

The protein belongs to the universal ribosomal protein uS15 family. Part of the 30S ribosomal subunit. Forms a bridge to the 50S subunit in the 70S ribosome, contacting the 23S rRNA.

Its function is as follows. One of the primary rRNA binding proteins, it binds directly to 16S rRNA where it helps nucleate assembly of the platform of the 30S subunit by binding and bridging several RNA helices of the 16S rRNA. Forms an intersubunit bridge (bridge B4) with the 23S rRNA of the 50S subunit in the ribosome. This Roseiflexus sp. (strain RS-1) protein is Small ribosomal subunit protein uS15.